The primary structure comprises 364 residues: Ferrochelatase (364 aa).

The Fe cation site is built by H211 and E292.

Belongs to the ferrochelatase family.

It localises to the cytoplasm. It carries out the reaction heme b + 2 H(+) = protoporphyrin IX + Fe(2+). Its pathway is porphyrin-containing compound metabolism; protoheme biosynthesis; protoheme from protoporphyrin-IX: step 1/1. Functionally, catalyzes the ferrous insertion into protoporphyrin IX. This is Ferrochelatase from Nitrosomonas europaea (strain ATCC 19718 / CIP 103999 / KCTC 2705 / NBRC 14298).